The sequence spans 306 residues: Porphobilinogen deaminase (306 aa).

Cys-239 is subject to S-(dipyrrolylmethanemethyl)cysteine.

Belongs to the HMBS family. As to quaternary structure, monomer. Dipyrromethane is required as a cofactor.

It carries out the reaction 4 porphobilinogen + H2O = hydroxymethylbilane + 4 NH4(+). The protein operates within porphyrin-containing compound metabolism; protoporphyrin-IX biosynthesis; coproporphyrinogen-III from 5-aminolevulinate: step 2/4. In terms of biological role, tetrapolymerization of the monopyrrole PBG into the hydroxymethylbilane pre-uroporphyrinogen in several discrete steps. The protein is Porphobilinogen deaminase (hemC) of Helicobacter pylori (strain ATCC 700392 / 26695) (Campylobacter pylori).